A 68-amino-acid polypeptide reads, in one-letter code: Large ribosomal subunit protein uL29 (68 aa).

The protein belongs to the universal ribosomal protein uL29 family.

The sequence is that of Large ribosomal subunit protein uL29 (rpl29) from Thermoplasma acidophilum (strain ATCC 25905 / DSM 1728 / JCM 9062 / NBRC 15155 / AMRC-C165).